The following is a 248-amino-acid chain: Small ribosomal subunit protein uS3 (248 aa).

A KH type-2 domain is found at 39 to 108 (IRKLVSQKLA…TVAVNVAEIP (70 aa)). The tract at residues 212 to 248 (KTETLARPPRKSDERRREDGERPSRRRPTARRRPGGE) is disordered. The segment covering 221–234 (RKSDERRREDGERP) has biased composition (basic and acidic residues). The span at 235–248 (SRRRPTARRRPGGE) shows a compositional bias: basic residues.

Belongs to the universal ribosomal protein uS3 family. In terms of assembly, part of the 30S ribosomal subunit. Forms a tight complex with proteins S10 and S14.

Functionally, binds the lower part of the 30S subunit head. Binds mRNA in the 70S ribosome, positioning it for translation. In Deinococcus geothermalis (strain DSM 11300 / CIP 105573 / AG-3a), this protein is Small ribosomal subunit protein uS3.